The sequence spans 533 residues: L-aspartate oxidase 1 (533 aa).

FAD-binding positions include 10–13 (SGLA), Lys32, 39–46 (ASDWAQGG), and Asp214. The active-site Proton donor/acceptor is the Arg281. FAD contacts are provided by residues Glu366 and 382–383 (SL).

This sequence belongs to the FAD-dependent oxidoreductase 2 family. NadB subfamily. FAD is required as a cofactor.

It localises to the cytoplasm. The catalysed reaction is L-aspartate + O2 = iminosuccinate + H2O2. It functions in the pathway cofactor biosynthesis; NAD(+) biosynthesis; iminoaspartate from L-aspartate (oxidase route): step 1/1. In terms of biological role, catalyzes the oxidation of L-aspartate to iminoaspartate, the first step in the de novo biosynthesis of NAD(+). The sequence is that of L-aspartate oxidase 1 (nadB1) from Ralstonia nicotianae (strain ATCC BAA-1114 / GMI1000) (Ralstonia solanacearum).